The chain runs to 152 residues: 2-C-methyl-D-erythritol 2,4-cyclodiphosphate synthase (152 aa).

The a divalent metal cation site is built by D8 and H10. 4-CDP-2-C-methyl-D-erythritol 2-phosphate contacts are provided by residues 8–10 and 34–35; these read DSH and HS. H42 serves as a coordination point for a divalent metal cation. Residues 56–58, 61–65, 100–106, and 131–135 each bind 4-CDP-2-C-methyl-D-erythritol 2-phosphate; these read DIG, FPDTD, LDRPKLG, and FKTSE.

The protein belongs to the IspF family. As to quaternary structure, homotrimer. A divalent metal cation serves as cofactor.

The catalysed reaction is 4-CDP-2-C-methyl-D-erythritol 2-phosphate = 2-C-methyl-D-erythritol 2,4-cyclic diphosphate + CMP. The protein operates within isoprenoid biosynthesis; isopentenyl diphosphate biosynthesis via DXP pathway; isopentenyl diphosphate from 1-deoxy-D-xylulose 5-phosphate: step 4/6. Involved in the biosynthesis of isopentenyl diphosphate (IPP) and dimethylallyl diphosphate (DMAPP), two major building blocks of isoprenoid compounds. Catalyzes the conversion of 4-diphosphocytidyl-2-C-methyl-D-erythritol 2-phosphate (CDP-ME2P) to 2-C-methyl-D-erythritol 2,4-cyclodiphosphate (ME-CPP) with a corresponding release of cytidine 5-monophosphate (CMP). The sequence is that of 2-C-methyl-D-erythritol 2,4-cyclodiphosphate synthase from Thermus thermophilus (strain ATCC 27634 / DSM 579 / HB8).